A 338-amino-acid chain; its full sequence is Tagatose 1,6-diphosphate aldolase (338 aa).

This sequence belongs to the aldolase LacD family.

The catalysed reaction is D-tagatofuranose 1,6-bisphosphate = D-glyceraldehyde 3-phosphate + dihydroxyacetone phosphate. It functions in the pathway carbohydrate metabolism; D-tagatose 6-phosphate degradation; D-glyceraldehyde 3-phosphate and glycerone phosphate from D-tagatose 6-phosphate: step 2/2. The sequence is that of Tagatose 1,6-diphosphate aldolase from Listeria monocytogenes serovar 1/2a (strain ATCC BAA-679 / EGD-e).